The following is a 209-amino-acid chain: Rac-like GTP-binding protein ARAC7 (209 aa).

Gly-13 to Thr-20 provides a ligand contact to GTP. The short motif at Tyr-35–Phe-43 is the Effector region element. GTP-binding positions include Asp-60–Gln-64 and Thr-118–Asp-121. Residues Cys-196, Cys-203, and Cys-206 are each lipidated (S-palmitoyl cysteine).

Belongs to the small GTPase superfamily. Rho family. In terms of processing, although this sequence has a C-terminal -CXXX, it is palmitoylated at Cys-206, rather than prenylated.

The protein resides in the membrane. Functionally, acts as a negative regulator of abscisic acid (ABA) responses. The chain is Rac-like GTP-binding protein ARAC7 (ARAC7) from Arabidopsis thaliana (Mouse-ear cress).